The sequence spans 506 residues: Nucleosome assembly protein 1-like 3 (506 aa).

Disordered regions lie at residues 1-95 (MAEA…LGTN) and 157-307 (PTEE…KRED). Low complexity predominate over residues 35 to 70 (SSSSSSSTSDSSSSSSTSGSSSGSGSSSSSSGSTSS). Residues 157–178 (PTEEECEWNSEDEEFSSDEEVQ) are compositionally biased toward acidic residues. Residues 196–296 (PKENPEVKAE…ERLQDSVDLK (101 aa)) show a composition bias toward basic and acidic residues.

It belongs to the nucleosome assembly protein (NAP) family.

The protein resides in the nucleus. This is Nucleosome assembly protein 1-like 3 (NAP1L3) from Homo sapiens (Human).